Consider the following 78-residue polypeptide: Putative Fe(2+) transport protein A (78 aa).

Belongs to the FeoA family.

Might be involved in Fe(2+) ion uptake. This Helicobacter pylori (strain J99 / ATCC 700824) (Campylobacter pylori J99) protein is Putative Fe(2+) transport protein A.